The chain runs to 116 residues: Signal recognition particle 14 kDa protein (116 aa).

It belongs to the SRP14 family. In terms of assembly, heterodimer with ZK512.4/SRP9; binds RNA as heterodimer. Component of a signal recognition particle (SRP) complex that consists of a 7SL RNA molecule of 300 nucleotides and six protein subunits: srpa-72, srpa-68, SRP54, F37F2.2/SRP19, F25G6.8/SRP14 and ZK512.4/SRP9.

Its subcellular location is the cytoplasm. Its function is as follows. Component of the signal recognition particle (SRP) complex, a ribonucleoprotein complex that mediates the cotranslational targeting of secretory and membrane proteins to the endoplasmic reticulum (ER). F37F2.2/srpa-19 together with F25G6.8/srpa-14 and the Alu portion of the SRP RNA, constitutes the elongation arrest domain of SRP. The complex of F37F2.2/srpa-19 and F25G6.8/srpa-14 is required for SRP RNA binding. This chain is Signal recognition particle 14 kDa protein, found in Caenorhabditis elegans.